A 471-amino-acid chain; its full sequence is V-type ATP synthase beta chain (471 aa).

Belongs to the ATPase alpha/beta chains family.

Its function is as follows. Produces ATP from ADP in the presence of a proton gradient across the membrane. The V-type beta chain is a regulatory subunit. In Streptococcus pyogenes serotype M12 (strain MGAS2096), this protein is V-type ATP synthase beta chain.